A 473-amino-acid polypeptide reads, in one-letter code: Ribosomal RNA small subunit methyltransferase F (473 aa).

Residues 123–129 (AAAPGSK), glutamate 147, aspartate 174, and aspartate 192 contribute to the S-adenosyl-L-methionine site. Residue cysteine 245 is the Nucleophile of the active site.

This sequence belongs to the class I-like SAM-binding methyltransferase superfamily. RsmB/NOP family.

It localises to the cytoplasm. The catalysed reaction is cytidine(1407) in 16S rRNA + S-adenosyl-L-methionine = 5-methylcytidine(1407) in 16S rRNA + S-adenosyl-L-homocysteine + H(+). Functionally, specifically methylates the cytosine at position 1407 (m5C1407) of 16S rRNA. The sequence is that of Ribosomal RNA small subunit methyltransferase F from Vibrio cholerae serotype O1 (strain ATCC 39315 / El Tor Inaba N16961).